Consider the following 243-residue polypeptide: 3-deoxy-manno-octulosonate cytidylyltransferase (243 aa).

This sequence belongs to the KdsB family.

The protein resides in the cytoplasm. The enzyme catalyses 3-deoxy-alpha-D-manno-oct-2-ulosonate + CTP = CMP-3-deoxy-beta-D-manno-octulosonate + diphosphate. It participates in nucleotide-sugar biosynthesis; CMP-3-deoxy-D-manno-octulosonate biosynthesis; CMP-3-deoxy-D-manno-octulosonate from 3-deoxy-D-manno-octulosonate and CTP: step 1/1. The protein operates within bacterial outer membrane biogenesis; lipopolysaccharide biosynthesis. Its function is as follows. Activates KDO (a required 8-carbon sugar) for incorporation into bacterial lipopolysaccharide in Gram-negative bacteria. This Helicobacter pylori (strain J99 / ATCC 700824) (Campylobacter pylori J99) protein is 3-deoxy-manno-octulosonate cytidylyltransferase.